A 448-amino-acid chain; its full sequence is Trigger factor (448 aa).

In terms of domain architecture, PPIase FKBP-type spans 172-257 (GDRVTVDFVG…MKKIEWPHLP (86 aa)).

Belongs to the FKBP-type PPIase family. Tig subfamily.

It localises to the cytoplasm. The catalysed reaction is [protein]-peptidylproline (omega=180) = [protein]-peptidylproline (omega=0). In terms of biological role, involved in protein export. Acts as a chaperone by maintaining the newly synthesized protein in an open conformation. Functions as a peptidyl-prolyl cis-trans isomerase. The protein is Trigger factor of Burkholderia orbicola (strain MC0-3).